Consider the following 1767-residue polypeptide: Endo-alpha-N-acetylgalactosaminidase (1767 aa).

Positions 1–39 (MNKGLFEKRCKYSIRKFSLGVASVMIGATFFGTSPVLAD) are cleaved as a signal peptide. 2 stretches are compositionally biased toward basic and acidic residues: residues 63-75 (NDGHDFEAPKVGE) and 84-111 (DGPKTEEELLALEKEKPAEEKPKEDKPA). Disordered regions lie at residues 63–137 (NDGH…QGTV) and 301–324 (VKTDNQEGVKTEDTPAEKETGPEV). Positions 112 to 124 (AAKPETPKTVTPE) are enriched in low complexity. Basic and acidic residues-rich tracts occupy residues 127-137 (TVEKKEQQGTV) and 304-324 (DNQEGVKTEDTPAEKETGPEV). Ca(2+)-binding residues include Asp577, Asn579, Asp581, Lys583, and Asp588. The catalytic stretch occupies residues 602 to 893 (GWKKVKDITA…DVMTKYFQHF (292 aa)). Asp658 contacts substrate. The Nucleophile role is filled by Asp764. Glu796 functions as the Proton donor/acceptor in the catalytic mechanism. Residues Asp1233, Glu1235, Glu1281, Trp1284, and Asp1411 each coordinate Ca(2+). Positions 1735 to 1739 (LPATG) match the LPXTG sorting signal motif. Thr1738 is modified (pentaglycyl murein peptidoglycan amidated threonine). The propeptide at 1739–1767 (GESQFDTALFLASVSLALSALFVVKTKKD) is removed by sortase.

The protein belongs to the glycosyl hydrolase 101 family. A subfamily.

The protein resides in the secreted. The protein localises to the cell wall. The enzyme catalyses a 3-O-[beta-D-galactosyl-(1-&gt;3)-N-acetyl-alpha-D-galactosaminyl]-L-threonyl-[protein] + H2O = beta-D-galactosyl-(1-&gt;3)-N-acetyl-D-galactosamine + L-threonyl-[protein]. It carries out the reaction a 3-O-[beta-D-galactosyl-(1-&gt;3)-N-acetyl-alpha-D-galactosaminyl]-L-seryl-[protein] + H2O = beta-D-galactosyl-(1-&gt;3)-N-acetyl-D-galactosamine + L-seryl-[protein]. Its function is as follows. Involved in the breakdown of mucin-type O-linked glycans. Specifically removes the T-antigen disaccharide (Gal-beta-1,3-GalNAc-alpha) from extracellular host glycoproteins. Representative of a broadly important class of virulence factors. This chain is Endo-alpha-N-acetylgalactosaminidase, found in Streptococcus pneumoniae (strain ATCC BAA-255 / R6).